A 517-amino-acid polypeptide reads, in one-letter code: MQLNPAEISELIKSRIEGLAGSSDIRNEGTVVSVTDGIVRVHGLSDVMQGEMLEFPAGKDGQPSFGLALNLERDSVGAVILGEYEHISEGDTVKCTGRILEVPVGPELIGRVVNALGQPIDGKGPINAKMTDVIEKVAPGVIARQSVDQPLQTGIKSIDSMVPVGRGQRELIIGDRQTGKTAVAIDAIINQKGQGVTCIYVAIGQKASSIKNVVRALEQAGAMEYTIVVAATASESAAMQYVSAYSGCTMGEYFRDRGEDALIVYDDLSKQAVAYRQVSLLLRRPPGREAFPGDVFYLHSRLLERAARVNADYVEAFTKGEVKGKTGSLTALPIIETQAGDVSAFVPTNVISITDGQIFLETSLFNAGIRPAINAGISVSRVGGAAQTKLVKGQSGGIRTDLAQYRELAAFAQFASDLDEATRKQLDRGARVTELLKQAQYSPLSTALMGASLFAVNKGYMDDIQVKQVLAFESGLHQFLKTSHGALIDKLNASKAMDKDSEAELNAAIAAFKKSFA.

Position 174 to 181 (174 to 181 (GDRQTGKT)) interacts with ATP.

It belongs to the ATPase alpha/beta chains family. As to quaternary structure, F-type ATPases have 2 components, CF(1) - the catalytic core - and CF(0) - the membrane proton channel. CF(1) has five subunits: alpha(3), beta(3), gamma(1), delta(1), epsilon(1). CF(0) has three main subunits: a(1), b(2) and c(9-12). The alpha and beta chains form an alternating ring which encloses part of the gamma chain. CF(1) is attached to CF(0) by a central stalk formed by the gamma and epsilon chains, while a peripheral stalk is formed by the delta and b chains.

The protein localises to the cell inner membrane. It catalyses the reaction ATP + H2O + 4 H(+)(in) = ADP + phosphate + 5 H(+)(out). Functionally, produces ATP from ADP in the presence of a proton gradient across the membrane. The alpha chain is a regulatory subunit. This is ATP synthase subunit alpha from Delftia acidovorans (strain DSM 14801 / SPH-1).